The following is a 153-amino-acid chain: Transcriptional repressor NrdR (153 aa).

The segment at 3–34 (CPFCNNISTNVKDSRSIEDDMLIRRRRVCPVC) is a zinc-finger region. The ATP-cone domain maps to 49-139 (LMVIKKNGGL…VYMNFKNIND (91 aa)).

This sequence belongs to the NrdR family. Requires Zn(2+) as cofactor.

In terms of biological role, negatively regulates transcription of bacterial ribonucleotide reductase nrd genes and operons by binding to NrdR-boxes. The protein is Transcriptional repressor NrdR of Ehrlichia ruminantium (strain Gardel).